The sequence spans 165 residues: MIRIGHGFDVHKFGGVGPLTIGGEKIDYPQGFLAHSDGDVAIHALCDAILGALAMGDIGKHFPDTASEYENIDSRILLRHVVSLAKEQGYVLGNGDVTIVAQAPKMLPHIQAMRSNLASDLNCELSQINVKATTTEKLGFEGRKEGISSHAVVIMNKESMSKTNA.

Residues aspartate 9 and histidine 11 each coordinate a divalent metal cation. 4-CDP-2-C-methyl-D-erythritol 2-phosphate-binding positions include 9-11 (DVH) and 35-36 (HS). Histidine 43 provides a ligand contact to a divalent metal cation. 4-CDP-2-C-methyl-D-erythritol 2-phosphate-binding positions include 57-59 (DIG), 101-107 (AQAPKML), 133-136 (TTTE), phenylalanine 140, and arginine 143.

It belongs to the IspF family. As to quaternary structure, homotrimer. Requires a divalent metal cation as cofactor.

The enzyme catalyses 4-CDP-2-C-methyl-D-erythritol 2-phosphate = 2-C-methyl-D-erythritol 2,4-cyclic diphosphate + CMP. It participates in isoprenoid biosynthesis; isopentenyl diphosphate biosynthesis via DXP pathway; isopentenyl diphosphate from 1-deoxy-D-xylulose 5-phosphate: step 4/6. In terms of biological role, involved in the biosynthesis of isopentenyl diphosphate (IPP) and dimethylallyl diphosphate (DMAPP), two major building blocks of isoprenoid compounds. Catalyzes the conversion of 4-diphosphocytidyl-2-C-methyl-D-erythritol 2-phosphate (CDP-ME2P) to 2-C-methyl-D-erythritol 2,4-cyclodiphosphate (ME-CPP) with a corresponding release of cytidine 5-monophosphate (CMP). This is 2-C-methyl-D-erythritol 2,4-cyclodiphosphate synthase from Pseudoalteromonas translucida (strain TAC 125).